Here is a 333-residue protein sequence, read N- to C-terminus: Mycothiol acetyltransferase (333 aa).

N-acetyltransferase domains follow at residues 18-170 and 176-333; these read PTLS…LPEP and VTVR…AAAD. Residue Glu46 coordinates 1D-myo-inositol 2-(L-cysteinylamino)-2-deoxy-alpha-D-glucopyranoside. 98–100 contacts acetyl-CoA; that stretch reads IVV. Residues Glu203, Lys242, and Glu261 each contribute to the 1D-myo-inositol 2-(L-cysteinylamino)-2-deoxy-alpha-D-glucopyranoside site. Acetyl-CoA is bound by residues 265–267 and 272–278; these read VGV and GGAGLGR. Residue Tyr299 participates in 1D-myo-inositol 2-(L-cysteinylamino)-2-deoxy-alpha-D-glucopyranoside binding. Residue 304 to 309 participates in acetyl-CoA binding; it reads NERAVR.

The protein belongs to the acetyltransferase family. MshD subfamily. In terms of assembly, monomer.

The enzyme catalyses 1D-myo-inositol 2-(L-cysteinylamino)-2-deoxy-alpha-D-glucopyranoside + acetyl-CoA = mycothiol + CoA + H(+). In terms of biological role, catalyzes the transfer of acetyl from acetyl-CoA to desacetylmycothiol (Cys-GlcN-Ins) to form mycothiol. This chain is Mycothiol acetyltransferase, found in Frankia alni (strain DSM 45986 / CECT 9034 / ACN14a).